The chain runs to 635 residues: UvrABC system protein C (635 aa).

The GIY-YIG domain maps to 20–97 (ERSGVYRMFD…IKKFQPKFNI (78 aa)). In terms of domain architecture, UVR spans 207–242 (KELQENLSKKMEELSEQMRFEEAAEIRDRIKALSYV).

Belongs to the UvrC family. In terms of assembly, interacts with UvrB in an incision complex.

It is found in the cytoplasm. The UvrABC repair system catalyzes the recognition and processing of DNA lesions. UvrC both incises the 5' and 3' sides of the lesion. The N-terminal half is responsible for the 3' incision and the C-terminal half is responsible for the 5' incision. The sequence is that of UvrABC system protein C from Rickettsia bellii (strain RML369-C).